Here is a 442-residue protein sequence, read N- to C-terminus: F-box/kelch-repeat protein OR23 (442 aa).

The F-box domain occupies 37 to 84 (TLIPGLSNDVGRLILSFVPYPHISRIKSTCKSWYAFLSSKTLISLRHS). Kelch repeat units lie at residues 93-139 (LSHL…NFVA), 145-200 (YVYV…AMPG), 204-257 (RIIV…LVEN), 269-328 (EFWV…KIVA), 330-377 (DCGK…ALNG), and 390-437 (LMDT…TTVM).

The sequence is that of F-box/kelch-repeat protein OR23 (OR23) from Arabidopsis thaliana (Mouse-ear cress).